Reading from the N-terminus, the 313-residue chain is MSSESDKKLEIRLASPRGFCAGVERAIETVKLALKEHGEPVYVLHEIVHNRHVIDNLRQGGAVFVEELEQIPAGAICIFSAHGVSLQIEKRAKALGLKTIDATCPLVSSVHRMVEKYHAEGCSVVIIGHHRHPEVEGTAGRVTGEVYVVATAAEAEKLQVNNSEKIAFVTQTTLAENDIEQVLVVLRRRFPLLQGPKSNICFATQNRQNAVRTLARCTDLILVVGSKNSSNSNRLREVGTETGTPAYLIDDFKDLKESWFRGCERVGITAGASAPESLVEGVVVWLLKRGRYEITEMTGQQEKVHFKAASLID.

A [4Fe-4S] cluster-binding site is contributed by C20. (2E)-4-hydroxy-3-methylbut-2-enyl diphosphate contacts are provided by H49 and H82. Residues H49 and H82 each coordinate dimethylallyl diphosphate. 2 residues coordinate isopentenyl diphosphate: H49 and H82. C104 serves as a coordination point for [4Fe-4S] cluster. Position 132 (H132) interacts with (2E)-4-hydroxy-3-methylbut-2-enyl diphosphate. H132 serves as a coordination point for dimethylallyl diphosphate. H132 contacts isopentenyl diphosphate. E134 serves as the catalytic Proton donor. (2E)-4-hydroxy-3-methylbut-2-enyl diphosphate is bound at residue T172. Position 201 (C201) interacts with [4Fe-4S] cluster. S229, S230, N231, and S273 together coordinate (2E)-4-hydroxy-3-methylbut-2-enyl diphosphate. Residues S229, S230, N231, and S273 each contribute to the dimethylallyl diphosphate site. The isopentenyl diphosphate site is built by S229, S230, N231, and S273.

This sequence belongs to the IspH family. It depends on [4Fe-4S] cluster as a cofactor.

It carries out the reaction isopentenyl diphosphate + 2 oxidized [2Fe-2S]-[ferredoxin] + H2O = (2E)-4-hydroxy-3-methylbut-2-enyl diphosphate + 2 reduced [2Fe-2S]-[ferredoxin] + 2 H(+). The enzyme catalyses dimethylallyl diphosphate + 2 oxidized [2Fe-2S]-[ferredoxin] + H2O = (2E)-4-hydroxy-3-methylbut-2-enyl diphosphate + 2 reduced [2Fe-2S]-[ferredoxin] + 2 H(+). It participates in isoprenoid biosynthesis; dimethylallyl diphosphate biosynthesis; dimethylallyl diphosphate from (2E)-4-hydroxy-3-methylbutenyl diphosphate: step 1/1. It functions in the pathway isoprenoid biosynthesis; isopentenyl diphosphate biosynthesis via DXP pathway; isopentenyl diphosphate from 1-deoxy-D-xylulose 5-phosphate: step 6/6. Its function is as follows. Catalyzes the conversion of 1-hydroxy-2-methyl-2-(E)-butenyl 4-diphosphate (HMBPP) into a mixture of isopentenyl diphosphate (IPP) and dimethylallyl diphosphate (DMAPP). Acts in the terminal step of the DOXP/MEP pathway for isoprenoid precursor biosynthesis. In Desulfotalea psychrophila (strain LSv54 / DSM 12343), this protein is 4-hydroxy-3-methylbut-2-enyl diphosphate reductase.